A 334-amino-acid chain; its full sequence is Probable GTP 3',8-cyclase (334 aa).

The Radical SAM core domain occupies 24–256; that stretch reads PYGRKVTGLR…RKKYIIDGVE (233 aa). Position 33 (R33) interacts with GTP. 2 residues coordinate [4Fe-4S] cluster: C40 and C44. Y46 lines the S-adenosyl-L-methionine pocket. C47 contacts [4Fe-4S] cluster. K85 contributes to the GTP binding site. An S-adenosyl-L-methionine-binding site is contributed by G89. T113 lines the GTP pocket. S137 contributes to the S-adenosyl-L-methionine binding site. K176 contributes to the GTP binding site. Residues C269 and C272 each coordinate [4Fe-4S] cluster. 274 to 276 lines the GTP pocket; that stretch reads RLR. C286 serves as a coordination point for [4Fe-4S] cluster.

Belongs to the radical SAM superfamily. MoaA family. [4Fe-4S] cluster serves as cofactor.

It carries out the reaction GTP + AH2 + S-adenosyl-L-methionine = (8S)-3',8-cyclo-7,8-dihydroguanosine 5'-triphosphate + 5'-deoxyadenosine + L-methionine + A + H(+). It participates in cofactor biosynthesis; molybdopterin biosynthesis. Its function is as follows. Catalyzes the cyclization of GTP to (8S)-3',8-cyclo-7,8-dihydroguanosine 5'-triphosphate. This Methanosarcina acetivorans (strain ATCC 35395 / DSM 2834 / JCM 12185 / C2A) protein is Probable GTP 3',8-cyclase.